The chain runs to 310 residues: tRNA pseudouridine synthase B (310 aa).

Asp47 serves as the catalytic Nucleophile.

This sequence belongs to the pseudouridine synthase TruB family. Type 1 subfamily.

It catalyses the reaction uridine(55) in tRNA = pseudouridine(55) in tRNA. Its function is as follows. Responsible for synthesis of pseudouridine from uracil-55 in the psi GC loop of transfer RNAs. This chain is tRNA pseudouridine synthase B, found in Caulobacter sp. (strain K31).